The chain runs to 1159 residues: Cation channel sperm-associated auxiliary subunit gamma (1159 aa).

The N-terminal stretch at Met1 to Leu35 is a signal peptide. The Extracellular portion of the chain corresponds to Trp36 to Arg1065. 2 disulfides stabilise this stretch: Cys44–Cys105 and Cys159–Cys165. An N-linked (GlcNAc...) asparagine glycan is attached at Asn102. Asn177 carries N-linked (GlcNAc...) asparagine glycosylation. A disulfide bridge connects residues Cys288 and Cys343. Residue Asn355 is glycosylated (N-linked (GlcNAc...) asparagine). Cys394 and Cys402 are joined by a disulfide. N-linked (GlcNAc...) asparagine glycosylation is found at Asn426 and Asn574. 5 cysteine pairs are disulfide-bonded: Cys638-Cys860, Cys806-Cys834, Cys882-Cys1046, Cys909-Cys918, and Cys1010-Cys1016. The helical transmembrane segment at Ala1066–Phe1087 threads the bilayer. Residues Cys1088–Thr1159 are Cytoplasmic-facing. The segment at Phe1138–Thr1159 is disordered. The segment covering Met1142–Thr1159 has biased composition (basic and acidic residues).

The protein belongs to the CATSPERG family. As to quaternary structure, component of the CatSper complex or CatSpermasome composed of the core pore-forming members CATSPER1, CATSPER2, CATSPER3 and CATSPER4 as well as auxiliary members CATSPERB, CATSPERG, CATSPERD, CATSPERE, CATSPERZ, SCLO6C1, TMEM249, TMEM262 and EFCAB9. HSPA1 may be an additional auxiliary complex member. The core complex members CATSPER1, CATSPER2, CATSPER3 and CATSPER4 form a heterotetrameric channel. The auxiliary CATSPERB, CATSPERG, CATSPERD and CATSPERE subunits form a pavilion-like structure over the pore which stabilizes the complex through interactions with CATSPER4, CATSPER3, CATSPER1 and CATSPER2 respectively. TMEM262/CATSPERH interacts with CATSPERB, further stabilizing the complex. C2CD6/CATSPERT interacts at least with CATSPERD and is required for targeting the CatSper complex in the flagellar membrane.

Its subcellular location is the cell projection. It localises to the cilium. It is found in the flagellum membrane. Auxiliary component of the CatSper complex, a complex involved in sperm cell hyperactivation. Sperm cell hyperactivation is needed for sperm motility which is essential late in the preparation of sperm for fertilization. The sequence is that of Cation channel sperm-associated auxiliary subunit gamma from Macaca fascicularis (Crab-eating macaque).